The chain runs to 121 residues: Small ribosomal subunit protein uS13 (121 aa).

The interval 89-121 is disordered; it reads MRHRRGLPVRGQHTKNNARTRKGKKVSIAGRKK.

The protein belongs to the universal ribosomal protein uS13 family. In terms of assembly, part of the 30S ribosomal subunit. Forms a loose heterodimer with protein S19. Forms two bridges to the 50S subunit in the 70S ribosome.

Located at the top of the head of the 30S subunit, it contacts several helices of the 16S rRNA. In the 70S ribosome it contacts the 23S rRNA (bridge B1a) and protein L5 of the 50S subunit (bridge B1b), connecting the 2 subunits; these bridges are implicated in subunit movement. Contacts the tRNAs in the A and P-sites. The chain is Small ribosomal subunit protein uS13 from Pediococcus pentosaceus (strain ATCC 25745 / CCUG 21536 / LMG 10740 / 183-1w).